A 458-amino-acid polypeptide reads, in one-letter code: Phosphomethylpyrimidine synthase (458 aa).

Substrate contacts are provided by residues Asn-80, Met-109, Tyr-139, His-175, Ser-195–Gly-197, Asp-236–Arg-239, and Glu-275. A Zn(2+)-binding site is contributed by His-279. Tyr-302 is a substrate binding site. His-343 provides a ligand contact to Zn(2+). Cys-423, Cys-426, and Cys-431 together coordinate [4Fe-4S] cluster.

The protein belongs to the ThiC family. [4Fe-4S] cluster serves as cofactor.

The catalysed reaction is 5-amino-1-(5-phospho-beta-D-ribosyl)imidazole + S-adenosyl-L-methionine = 4-amino-2-methyl-5-(phosphooxymethyl)pyrimidine + CO + 5'-deoxyadenosine + formate + L-methionine + 3 H(+). It participates in cofactor biosynthesis; thiamine diphosphate biosynthesis. Its function is as follows. Catalyzes the synthesis of the hydroxymethylpyrimidine phosphate (HMP-P) moiety of thiamine from aminoimidazole ribotide (AIR) in a radical S-adenosyl-L-methionine (SAM)-dependent reaction. The chain is Phosphomethylpyrimidine synthase from Cyanothece sp. (strain PCC 7425 / ATCC 29141).